Reading from the N-terminus, the 356-residue chain is Protein-glutamate methylesterase/protein-glutamine glutaminase 4 (356 aa).

Residues 15-132 (RVLVVDDSAV…SVGEMTADLV (118 aa)) form the Response regulatory domain. Asp66 is subject to 4-aspartylphosphate. The 187-residue stretch at 162–348 (ARTTLQVVAI…PLDRIAPEIL (187 aa)) folds into the CheB-type methylesterase domain. Residues Ser174, His200, and Asp296 contribute to the active site.

Belongs to the CheB family. In terms of processing, phosphorylated by CheA. Phosphorylation of the N-terminal regulatory domain activates the methylesterase activity.

The protein resides in the cytoplasm. It catalyses the reaction [protein]-L-glutamate 5-O-methyl ester + H2O = L-glutamyl-[protein] + methanol + H(+). The enzyme catalyses L-glutaminyl-[protein] + H2O = L-glutamyl-[protein] + NH4(+). In terms of biological role, involved in chemotaxis. Part of a chemotaxis signal transduction system that modulates chemotaxis in response to various stimuli. Catalyzes the demethylation of specific methylglutamate residues introduced into the chemoreceptors (methyl-accepting chemotaxis proteins or MCP) by CheR. Also mediates the irreversible deamidation of specific glutamine residues to glutamic acid. This Anaeromyxobacter dehalogenans (strain 2CP-C) protein is Protein-glutamate methylesterase/protein-glutamine glutaminase 4.